Consider the following 344-residue polypeptide: Palmitoyltransferase ZDHHC4 (344 aa).

Topologically, residues 1–2 (MD) are lumenal. A helical membrane pass occupies residues 3 to 23 (FLVLFLFYLASVLMGLVLICV). Topologically, residues 24 to 67 (CSKTHSLKGLARGGAQIFSCIIPECLQRAVHGLLHYLFHTRNHT) are cytoplasmic. The chain crosses the membrane as a helical span at residues 68-88 (FIVLHLVLQGMVYTEYTWEVF). Over 89–99 (GYCQELELSLH) the chain is Lumenal. Residues 100 to 120 (YLLLPYLLLGVNLFFFTLTCG) form a helical membrane-spanning segment. At 121–192 (TNPGIITKAN…NNCIGAWNIR (72 aa)) the chain is on the cytoplasmic side. The DHHC domain occupies 149–199 (VRCSTCDLRKPARSKHCSVCNWCVHRFDHHCVWVNNCIGAWNIRYFLIYVL). Residue Cys-179 is the S-palmitoyl cysteine intermediate of the active site. A helical transmembrane segment spans residues 193 to 213 (YFLIYVLTLTASAATVAIVST). The Lumenal portion of the chain corresponds to 214-255 (TFLVHLVVMSDLYQETYIDDLGHLHVMDTVFLIQYLFLTFPR). The chain crosses the membrane as a helical span at residues 256-276 (IVFMLGFVVVLSFLLGGYLLF). The Cytoplasmic portion of the chain corresponds to 277–344 (VLYLAATNQT…FPCHERKKQE (68 aa)). The short motif at 341-344 (KKQE) is the Di-lysine motif element.

It belongs to the DHHC palmitoyltransferase family. As to quaternary structure, interacts with CPT1A.

It is found in the endoplasmic reticulum membrane. The protein localises to the golgi apparatus membrane. Its subcellular location is the cell membrane. The catalysed reaction is L-cysteinyl-[protein] + hexadecanoyl-CoA = S-hexadecanoyl-L-cysteinyl-[protein] + CoA. Palmitoyltransferase that catalyzes the addition of palmitate onto protein substrates including the D(2) dopamine receptor DRD2, GSK3B or MAVS. Mediates GSK3B palmitoylation to prevent its AKT1-mediated phosphorylation leading to activation of the STAT3 signaling pathway. Also catalyzes MAVS palmitoylation which promotes its stabilization and activation by inhibiting 'Lys-48'- but facilitating 'Lys-63'-linked ubiquitination. The polypeptide is Palmitoyltransferase ZDHHC4 (Homo sapiens (Human)).